The sequence spans 189 residues: Peptidyl-tRNA hydrolase (189 aa).

Residue Phe15 coordinates tRNA. The active-site Proton acceptor is His20. Tyr65, Asn67, and Asn113 together coordinate tRNA.

This sequence belongs to the PTH family. Monomer.

Its subcellular location is the cytoplasm. It carries out the reaction an N-acyl-L-alpha-aminoacyl-tRNA + H2O = an N-acyl-L-amino acid + a tRNA + H(+). Functionally, hydrolyzes ribosome-free peptidyl-tRNAs (with 1 or more amino acids incorporated), which drop off the ribosome during protein synthesis, or as a result of ribosome stalling. Its function is as follows. Catalyzes the release of premature peptidyl moieties from peptidyl-tRNA molecules trapped in stalled 50S ribosomal subunits, and thus maintains levels of free tRNAs and 50S ribosomes. The chain is Peptidyl-tRNA hydrolase from Phytoplasma australiense.